A 606-amino-acid chain; its full sequence is Mitogen-activated protein kinase 20 (606 aa).

Residues 25-316 (FKVQEVIGKG…AEEALADPYF (292 aa)) form the Protein kinase domain. Residues 31 to 39 (IGKGSYGVV) and K54 each bind ATP. The Proton acceptor role is filled by D151. At T187 the chain carries Phosphothreonine. Positions 187-189 (TDY) match the TXY motif. Position 189 is a phosphotyrosine (Y189). T192 is modified (phosphothreonine).

It belongs to the protein kinase superfamily. CMGC Ser/Thr protein kinase family. MAP kinase subfamily. In terms of processing, dually phosphorylated on Thr-187 and Tyr-189, which activates the enzyme.

The catalysed reaction is L-seryl-[protein] + ATP = O-phospho-L-seryl-[protein] + ADP + H(+). It carries out the reaction L-threonyl-[protein] + ATP = O-phospho-L-threonyl-[protein] + ADP + H(+). Activated by threonine and tyrosine phosphorylation. The protein is Mitogen-activated protein kinase 20 (MPK20) of Arabidopsis thaliana (Mouse-ear cress).